Consider the following 1531-residue polypeptide: Slit homolog 1 protein (1531 aa).

Positions 1 to 33 (MALTPQRGSSSGLSRPELWLLLWAAAWRLGATA) are cleaved as a signal peptide. Residues 34-61 (CPALCTCTGTTVDCHGTGLQAIPKNIPR) form the LRRNT domain. 6 LRR repeats span residues 62 to 83 (NTER…DFAG), 86 to 107 (QLRV…AFDD), 110 to 131 (ELER…LFQN), 134 to 155 (ALSR…AFRG), 158 to 179 (DLKN…AFRA), and 182 to 203 (GLEV…SFNH). N-linked (GlcNAc...) asparagine glycosylation is present at Asn72. An N-linked (GlcNAc...) asparagine glycan is attached at Asn192. In terms of domain architecture, LRRCT 1 spans 215 to 265 (NHLFCDCHLAWLSQWLRQRPTIGLFTQCSGPASLRGLNVAEVQKSEFSCSG). Residues 273–309 (PACTLSSGSCPAMCSCSNGIVDCRGKGLTAIPANLPE) form the LRRNT 2 domain. Cys286 and Cys295 form a disulfide bridge. LRR repeat units lie at residues 310-331 (TMTE…AFSP), 334-355 (KLRR…AFQG), 358-379 (SLNS…VFGG), 382-403 (TLQL…AFQD), and 406-427 (NLSL…TFTS). Asn406 carries an N-linked (GlcNAc...) asparagine glycan. One can recognise an LRRCT 2 domain in the interval 439–489 (NPFICDCNLKWLADFLRTNPIETTGARCASPRRLANKRIGQIKSKKFRCSA). Cystine bridges form between Cys443–Cys466, Cys445–Cys487, Cys513–Cys519, and Cys517–Cys526. The region spanning 504–540 (NSECTSDVACPHKCRCEASVVECSGLKLSKIPERIPQ) is the LRRNT 3 domain. LRR repeat units lie at residues 541–562 (STTE…GLFK), 566–587 (HLKK…TFEG), 590–611 (SVSE…MFRG), 614–635 (GLRT…SFTG), and 638–659 (NVRL…AFDT). Asn571 is a glycosylation site (N-linked (GlcNAc...) asparagine). N-linked (GlcNAc...) asparagine glycosylation is present at Asn630. The 51-residue stretch at 671–721 (NPFNCNCQLAWLGDWLRKRKIVTGNPRCQNPDFLRQIPLQDVAFPDFRCEE) folds into the LRRCT 3 domain. Cystine bridges form between Cys675–Cys698 and Cys677–Cys719. The region spanning 725–761 (EVGCLPRPQCPQECACLDTVVRCSNKHLQALPKGIPK) is the LRRNT 4 domain. Residues Asn762, Asn801, and Asn806 are each glycosylated (N-linked (GlcNAc...) asparagine). LRR repeat units follow at residues 762–783 (NVTE…LSTF), 785–806 (YLQL…SFTN), 809–830 (QLTT…AFQG), and 833–854 (SLRL…IFAD). An LRRCT 4 domain is found at 866 to 916 (NPLYCDCHLRWLSSWVKTGYKEPGIARCAGPPEMEGKLLLTTPAKKFECQG). 6 EGF-like domains span residues 927 to 962 (DPCL…RNCE), 964 to 1003 (SLDS…LTCG), 1005 to 1041 (NTDD…RACE), 1043 to 1081 (LVDF…DNCS), 1083 to 1119 (NQDD…QLCE), and 1124 to 1160 (PRNS…PECE). Cystine bridges form between Cys929–Cys940, Cys934–Cys950, Cys952–Cys961, Cys968–Cys979, Cys973–Cys991, Cys993–Cys1002, Cys1009–Cys1020, Cys1014–Cys1029, Cys1031–Cys1040, Cys1047–Cys1060, Cys1054–Cys1069, Cys1071–Cys1080, Cys1087–Cys1098, Cys1092–Cys1107, Cys1109–Cys1118, Cys1128–Cys1139, Cys1133–Cys1148, and Cys1150–Cys1159. N-linked (GlcNAc...) asparagine glycosylation is present at Asn1026. Asn1079 carries N-linked (GlcNAc...) asparagine glycosylation. Residues 1163 to 1336 (LSVNFVDRDT…QMKPGVVPGC (174 aa)) form the Laminin G-like domain. N-linked (GlcNAc...) asparagine glycans are attached at residues Asn1186, Asn1256, and Asn1303. Intrachain disulfides connect Cys1310-Cys1336, Cys1339-Cys1349, Cys1344-Cys1359, Cys1361-Cys1370, Cys1378-Cys1388, Cys1383-Cys1398, Cys1400-Cys1409, Cys1419-Cys1429, Cys1424-Cys1439, Cys1441-Cys1450, Cys1456-Cys1495, Cys1474-Cys1509, Cys1485-Cys1525, and Cys1489-Cys1527. 3 EGF-like domains span residues 1337–1371 (EPCR…LHCD), 1374–1410 (VDGP…ALCN), and 1415–1451 (VAEP…ELCE). A CTCK domain is found at 1456 to 1531 (CRGDPVRDFH…PTKCGCAPCA (76 aa)).

Interacts with ROBO1 and GREM1. As to expression, in adult brains expressed in the hippocampus, cerebral cortex, and olfactory bulb but not in the cerebellum. In embryo expressed in cerebral cortex.

Its subcellular location is the secreted. Thought to act as molecular guidance cue in cellular migration, and function appears to be mediated by interaction with roundabout homolog receptors. During neural development involved in axonal navigation at the ventral midline of the neural tube and projection of axons to different regions. SLIT1 and SLIT2 together seem to be essential for midline guidance in the forebrain by acting as repulsive signal preventing inappropriate midline crossing by axons projecting from the olfactory bulb. This chain is Slit homolog 1 protein (Slit1), found in Rattus norvegicus (Rat).